Here is a 108-residue protein sequence, read N- to C-terminus: Nucleoid-associated protein BMASAVP1_A1850 (108 aa).

The interval 84–108 (EATSQEKMSGMTSGLPLPPGFKLPF) is disordered. Polar residues predominate over residues 85–95 (ATSQEKMSGMT). The segment covering 99 to 108 (PLPPGFKLPF) has biased composition (pro residues).

The protein belongs to the YbaB/EbfC family. As to quaternary structure, homodimer.

It localises to the cytoplasm. Its subcellular location is the nucleoid. Its function is as follows. Binds to DNA and alters its conformation. May be involved in regulation of gene expression, nucleoid organization and DNA protection. The sequence is that of Nucleoid-associated protein BMASAVP1_A1850 from Burkholderia mallei (strain SAVP1).